Here is a 244-residue protein sequence, read N- to C-terminus: Thiol S-methyltransferase TMT1B (244 aa).

The signal sequence occupies residues 1–23 (MDVLVPLLQLLVLLLTLPLHLLA).

This sequence belongs to the methyltransferase superfamily. As to expression, highly expressed in liver and kidney. No expression in testis, heart, lung, brain, spleen or cultured fibroblasts.

It is found in the endoplasmic reticulum membrane. Its subcellular location is the lipid droplet. The protein localises to the microsome. It localises to the cytoplasm. The protein resides in the cytosol. The enzyme catalyses a thiol + S-adenosyl-L-methionine = a methyl thioether + S-adenosyl-L-homocysteine + H(+). Thiol S-methyltransferase that catalyzes the transfer of a methyl group from S-adenosyl-L-methionine to alkyl and phenolic thiol-containing acceptor substrates. Together with TMT1B accounts for most of S-thiol methylation activity in the endoplasmic reticulum of hepatocytes. Selectively methylates S-centered nucleophiles from metabolites such as hydrogen sulfide and dithiothreitol. This is Thiol S-methyltransferase TMT1B (Tmt1b) from Rattus norvegicus (Rat).